Reading from the N-terminus, the 201-residue chain is Holliday junction branch migration complex subunit RuvA (201 aa).

The domain I stretch occupies residues 1–63; it reads MYDYIKGTVT…EDNISLFGFQ (63 aa). Residues 64-142 form a domain II region; it reads TTEERYLFKK…DVVASEIVYV (79 aa). The flexible linker stretch occupies residues 143–153; the sequence is APENDMVAGLS. Residues 153–201 form a domain III region; sequence SPQLEEAVLALEALGYSTRELKKVIPKLAKEADLTSDAYIKLALQLMTK.

It belongs to the RuvA family. As to quaternary structure, homotetramer. Forms an RuvA(8)-RuvB(12)-Holliday junction (HJ) complex. HJ DNA is sandwiched between 2 RuvA tetramers; dsDNA enters through RuvA and exits via RuvB. An RuvB hexamer assembles on each DNA strand where it exits the tetramer. Each RuvB hexamer is contacted by two RuvA subunits (via domain III) on 2 adjacent RuvB subunits; this complex drives branch migration. In the full resolvosome a probable DNA-RuvA(4)-RuvB(12)-RuvC(2) complex forms which resolves the HJ.

It localises to the cytoplasm. In terms of biological role, the RuvA-RuvB-RuvC complex processes Holliday junction (HJ) DNA during genetic recombination and DNA repair, while the RuvA-RuvB complex plays an important role in the rescue of blocked DNA replication forks via replication fork reversal (RFR). RuvA specifically binds to HJ cruciform DNA, conferring on it an open structure. The RuvB hexamer acts as an ATP-dependent pump, pulling dsDNA into and through the RuvAB complex. HJ branch migration allows RuvC to scan DNA until it finds its consensus sequence, where it cleaves and resolves the cruciform DNA. This is Holliday junction branch migration complex subunit RuvA from Listeria monocytogenes serovar 1/2a (strain ATCC BAA-679 / EGD-e).